Consider the following 318-residue polypeptide: Ribonuclease Z (318 aa).

Residues H62, H64, D66, H67, H139, D210, and H268 each contribute to the Zn(2+) site. The active-site Proton acceptor is D66.

The protein belongs to the RNase Z family. In terms of assembly, homodimer. The cofactor is Zn(2+).

It catalyses the reaction Endonucleolytic cleavage of RNA, removing extra 3' nucleotides from tRNA precursor, generating 3' termini of tRNAs. A 3'-hydroxy group is left at the tRNA terminus and a 5'-phosphoryl group is left at the trailer molecule.. Its function is as follows. Zinc phosphodiesterase, which displays some tRNA 3'-processing endonuclease activity. Probably involved in tRNA maturation, by removing a 3'-trailer from precursor tRNA. The polypeptide is Ribonuclease Z (Gloeothece citriformis (strain PCC 7424) (Cyanothece sp. (strain PCC 7424))).